A 320-amino-acid polypeptide reads, in one-letter code: Aspartate carbamoyltransferase catalytic subunit (320 aa).

Arginine 57 and threonine 58 together coordinate carbamoyl phosphate. Lysine 85 serves as a coordination point for L-aspartate. Carbamoyl phosphate is bound by residues arginine 107, histidine 141, and glutamine 144. L-aspartate-binding residues include arginine 174 and arginine 228. Glycine 269 and proline 270 together coordinate carbamoyl phosphate.

This sequence belongs to the aspartate/ornithine carbamoyltransferase superfamily. ATCase family. In terms of assembly, heterododecamer (2C3:3R2) of six catalytic PyrB chains organized as two trimers (C3), and six regulatory PyrI chains organized as three dimers (R2).

It carries out the reaction carbamoyl phosphate + L-aspartate = N-carbamoyl-L-aspartate + phosphate + H(+). It functions in the pathway pyrimidine metabolism; UMP biosynthesis via de novo pathway; (S)-dihydroorotate from bicarbonate: step 2/3. Catalyzes the condensation of carbamoyl phosphate and aspartate to form carbamoyl aspartate and inorganic phosphate, the committed step in the de novo pyrimidine nucleotide biosynthesis pathway. This Mycobacterium ulcerans (strain Agy99) protein is Aspartate carbamoyltransferase catalytic subunit.